We begin with the raw amino-acid sequence, 142 residues long: Large ribosomal subunit protein uL11 (142 aa).

It belongs to the universal ribosomal protein uL11 family. As to quaternary structure, part of the ribosomal stalk of the 50S ribosomal subunit. Interacts with L10 and the large rRNA to form the base of the stalk. L10 forms an elongated spine to which L12 dimers bind in a sequential fashion forming a multimeric L10(L12)X complex. Post-translationally, one or more lysine residues are methylated.

Its function is as follows. Forms part of the ribosomal stalk which helps the ribosome interact with GTP-bound translation factors. This chain is Large ribosomal subunit protein uL11, found in Shewanella sp. (strain W3-18-1).